Reading from the N-terminus, the 316-residue chain is Olfactory receptor 6B9 (316 aa).

Residues 1-22 (MENITNISEFILMGFPTAPWLQ) lie on the Extracellular side of the membrane. Asn3 and Asn6 each carry an N-linked (GlcNAc...) asparagine glycan. Residues 23 to 43 (ILLFSIFFITYVFVLLENLVI) traverse the membrane as a helical segment. The Cytoplasmic portion of the chain corresponds to 44-64 (ILTVWVTGSLHKPMYYFLSTM). A helical transmembrane segment spans residues 65–85 (SFLEAWYISVTVPKMLAGFLF). Residues 86-97 (RPNTISFLGCMT) lie on the Extracellular side of the membrane. A disulfide bridge links Cys95 with Cys187. The chain crosses the membrane as a helical span at residues 98-118 (QLYFFMSLACTECVLLAAMAY). Residues 119–132 (DRYVAICWPLRYPV) lie on the Cytoplasmic side of the membrane. The chain crosses the membrane as a helical span at residues 133 to 153 (MMTTGFCVQLTISSWVSGFTI). At 154–199 (SMAKVYFISRVAFCGNNVLNHFFCDVSPILKLACMNLSMAETVDFA) the chain is on the extracellular side. Residues 200–220 (LAIVILIFPLSATVLSYGFIV) traverse the membrane as a helical segment. Over 221–237 (STVLQIPSATGQRKAFS) the chain is Cytoplasmic. Residues 238–258 (TCASHLTVVVIFYTAVIFMYV) form a helical membrane-spanning segment. Topologically, residues 259–269 (RPRAIASFNSN) are extracellular. A helical transmembrane segment spans residues 270 to 290 (KLISAIYAVFTPMLNPIIYCL). At 291-316 (RNKEVKDAIRKTIAGGRAPALGESIS) the chain is on the cytoplasmic side.

The protein belongs to the G-protein coupled receptor 1 family. As to expression, olfactory epithelium.

The protein localises to the cell membrane. In terms of biological role, odorant receptor. This chain is Olfactory receptor 6B9, found in Mus musculus (Mouse).